An 887-amino-acid chain; its full sequence is Microsomal triglyceride transfer protein large subunit (887 aa).

Positions Phe1 to Ser11 are cleaved as a signal peptide. Residues Leu21 to Ile655 enclose the Vitellogenin domain. Cysteines 167 and 187 form a disulfide.

In terms of assembly, heterodimer; heterodimerizes with the protein disulfide isomerase (P4HB/PDI). Interacts with APOB. Interacts with PRAP1.

It is found in the endoplasmic reticulum. Its subcellular location is the golgi apparatus. The catalysed reaction is a 1,2-diacyl-sn-glycero-3-phosphocholine(in) = a 1,2-diacyl-sn-glycero-3-phosphocholine(out). It catalyses the reaction a 1,2-diacyl-sn-glycero-3-phosphoethanolamine(in) = a 1,2-diacyl-sn-glycero-3-phosphoethanolamine(out). It carries out the reaction a cholesterol ester(in) = a cholesterol ester(out). The enzyme catalyses a triacyl-sn-glycerol(in) = a triacyl-sn-glycerol(out). Its function is as follows. Catalyzes the transport of triglyceride, cholesteryl ester, and phospholipid between phospholipid surfaces. Required for the assembly and secretion of plasma lipoproteins that contain apolipoprotein B. May be involved in regulating cholesteryl ester biosynthesis in cells that produce lipoproteins. This chain is Microsomal triglyceride transfer protein large subunit (MTTP), found in Bos taurus (Bovine).